The primary structure comprises 93 residues: Small ribosomal subunit protein uS19 (93 aa).

The protein belongs to the universal ribosomal protein uS19 family.

Functionally, protein S19 forms a complex with S13 that binds strongly to the 16S ribosomal RNA. The polypeptide is Small ribosomal subunit protein uS19 (Nocardia farcinica (strain IFM 10152)).